The chain runs to 134 residues: Small ribosomal subunit protein uS17c (134 aa).

A chloroplast-targeting transit peptide spans 1–37 (HHFFTGNGIGLNRFSNPISSPQTQTQTRSLPFPAIKA). Residues 106-134 (FLAVPAPSRKSKKAGSSGELGIPLQSQQE) form a disordered region.

Belongs to the universal ribosomal protein uS17 family. As to quaternary structure, part of the 30S ribosomal subunit.

The protein localises to the plastid. It is found in the chloroplast. Its function is as follows. One of the primary rRNA binding proteins, it binds specifically to the 5'-end of 16S ribosomal RNA. This chain is Small ribosomal subunit protein uS17c (RPS17), found in Pisum sativum (Garden pea).